The primary structure comprises 319 residues: ATP-dependent 6-phosphofructokinase (319 aa).

Residue G11 participates in ATP binding. 21–25 (RAVVR) is an ADP binding site. ATP contacts are provided by residues 72-73 (RS) and 102-105 (GDGS). A Mg(2+)-binding site is contributed by D103. 125–127 (TID) is a substrate binding site. The active-site Proton acceptor is D127. R154 provides a ligand contact to ADP. Substrate is bound by residues R162 and 169-171 (MGR). ADP-binding positions include 185–187 (GAE), R211, and 213–215 (KKH). Substrate-binding positions include E222, R243, and 249–252 (HVQR).

The protein belongs to the phosphofructokinase type A (PFKA) family. ATP-dependent PFK group I subfamily. Prokaryotic clade 'B1' sub-subfamily. In terms of assembly, homotetramer. Requires Mg(2+) as cofactor.

It is found in the cytoplasm. It carries out the reaction beta-D-fructose 6-phosphate + ATP = beta-D-fructose 1,6-bisphosphate + ADP + H(+). The protein operates within carbohydrate degradation; glycolysis; D-glyceraldehyde 3-phosphate and glycerone phosphate from D-glucose: step 3/4. Allosterically activated by ADP and other diphosphonucleosides, and allosterically inhibited by phosphoenolpyruvate. Functionally, catalyzes the phosphorylation of D-fructose 6-phosphate to fructose 1,6-bisphosphate by ATP, the first committing step of glycolysis. In Natranaerobius thermophilus (strain ATCC BAA-1301 / DSM 18059 / JW/NM-WN-LF), this protein is ATP-dependent 6-phosphofructokinase.